Here is a 299-residue protein sequence, read N- to C-terminus: Oxygen-dependent coproporphyrinogen-III oxidase (299 aa).

Serine 92 is a binding site for substrate. The a divalent metal cation site is built by histidine 96 and histidine 106. The active-site Proton donor is the histidine 106. Residue 108 to 110 (NVR) participates in substrate binding. Residues histidine 145 and histidine 175 each coordinate a divalent metal cation. Positions 240–275 (YVEFNLVWDRGTLFGLQTGGRTESILMSMPPLVRWE) are important for dimerization. 258–260 (GGR) serves as a coordination point for substrate.

It belongs to the aerobic coproporphyrinogen-III oxidase family. In terms of assembly, homodimer. It depends on a divalent metal cation as a cofactor.

The protein localises to the cytoplasm. It carries out the reaction coproporphyrinogen III + O2 + 2 H(+) = protoporphyrinogen IX + 2 CO2 + 2 H2O. It participates in porphyrin-containing compound metabolism; protoporphyrin-IX biosynthesis; protoporphyrinogen-IX from coproporphyrinogen-III (O2 route): step 1/1. Its function is as follows. Involved in the heme biosynthesis. Catalyzes the aerobic oxidative decarboxylation of propionate groups of rings A and B of coproporphyrinogen-III to yield the vinyl groups in protoporphyrinogen-IX. The sequence is that of Oxygen-dependent coproporphyrinogen-III oxidase from Shigella flexneri.